The primary structure comprises 178 residues: Large ribosomal subunit protein uL6 (178 aa).

It belongs to the universal ribosomal protein uL6 family. In terms of assembly, part of the 50S ribosomal subunit.

In terms of biological role, this protein binds to the 23S rRNA, and is important in its secondary structure. It is located near the subunit interface in the base of the L7/L12 stalk, and near the tRNA binding site of the peptidyltransferase center. This chain is Large ribosomal subunit protein uL6, found in Campylobacter jejuni subsp. jejuni serotype O:2 (strain ATCC 700819 / NCTC 11168).